Consider the following 146-residue polypeptide: Acidic phospholipase A2 S5-32M (146 aa).

The N-terminal stretch at 1 to 19 (MYPAHLLVLLAVCVSLLGA) is a signal peptide. The propeptide occupies 20–27 (ASIPPQPL). 7 cysteine pairs are disulfide-bonded: cysteine 38-cysteine 98, cysteine 54-cysteine 145, cysteine 56-cysteine 72, cysteine 71-cysteine 126, cysteine 78-cysteine 119, cysteine 87-cysteine 112, and cysteine 105-cysteine 117. Ca(2+)-binding residues include tyrosine 55, glycine 57, and glycine 59. The active site involves histidine 75. Aspartate 76 is a Ca(2+) binding site. Aspartate 120 is a catalytic residue.

The protein belongs to the phospholipase A2 family. Group I subfamily. D49 sub-subfamily. Ca(2+) serves as cofactor. As to expression, expressed by the venom gland.

It is found in the secreted. It catalyses the reaction a 1,2-diacyl-sn-glycero-3-phosphocholine + H2O = a 1-acyl-sn-glycero-3-phosphocholine + a fatty acid + H(+). Functionally, snake venom phospholipase A2 (PLA2) that inhibits collagen-induced platelet aggregation. PLA2 catalyzes the calcium-dependent hydrolysis of the 2-acyl groups in 3-sn-phosphoglycerides. This Austrelaps superbus (Lowland copperhead snake) protein is Acidic phospholipase A2 S5-32M.